Reading from the N-terminus, the 4423-residue chain is Nonribosomal peptide synthetase 7 (4423 aa).

Positions 572–986 (NIYPCTSIQE…LISQDDKNRI (415 aa)) are condensation 1. Residues 1007–1404 (ERIQKQPSAV…GRRDTQVKIR (398 aa)) form an adenylation 1 region. Residues 1533 to 1609 (LPLTETEQKL…DLARTIDERN (77 aa)) enclose the Carrier 1 domain. An O-(pantetheine 4'-phosphoryl)serine modification is found at S1570. The segment at 1657–2066 (EDVYPCTSLQ…QFLDETHHET (410 aa)) is condensation 2. The adenylation 2 stretch occupies residues 2102 to 2499 (RDVAKEQPDS…YIGRMGSEVK (398 aa)). The region spanning 2642-2718 (VPQTRIGKKL…DCARILEADQ (77 aa)) is the Carrier 2 domain. Position 2679 is an O-(pantetheine 4'-phosphoryl)serine (S2679). The tract at residues 2764–3170 (EDVYPCTPMQ…AASASSDDQT (407 aa)) is condensation 3. Positions 3205 to 3609 (RSLETRPDSQ…GRGDSQIKIR (405 aa)) are adenylation 3. One can recognise a Carrier 3 domain in the interval 3731-3804 (TESEYITRTL…KMAVVAQHQT (74 aa)). Position 3765 is an O-(pantetheine 4'-phosphoryl)serine (S3765). The tract at residues 3875–4278 (TFVLDAEGDL…SQDEKLALLG (404 aa)) is condensation 4. Residues 4288 to 4300 (KLTKLQRVNSPKE) show a composition bias toward polar residues. Positions 4288 to 4312 (KLTKLQRVNSPKEQTLRKDKPTNGV) are disordered.

This sequence belongs to the NRP synthetase family.

It participates in secondary metabolite biosynthesis. Its function is as follows. Nonribosomal peptide synthetase; part of the gene cluster that mediates the biosynthesis of the lipopeptide fusaristatin A. Fusaristatin A consists of a polyketide chain linked to three amino acid residues glutamine (Gln), dehydroalanine (dehydro-Ala), and beta-aminoisobutyric acid. The biosynthesis starts with formation of a linear polyketide chain by the highly reducing polyketide synthase PKS6. The gene cluster does not contain an acyl-CoA ligase or an acyl-transferase, and it is therefore predicted that the polyketide is transferred directly to the nonribosomal peptide synthetase NRPS7. Modules 1-3 from NRPS7 incorporate dehydro-Ala, Gln, and beta-aminoisobutyric acid in the compound, which is released by cyclization. The beta-aminoisobutyric acid units are most likely not freely available to the NRPS, but can be synthesized from thymine, which requires a dehydrogenase, a monooxygenase, and an aminotransferase. The fusaristatin A cluster contains a cytochrome P450 monooxygenase (FGSG_08207) and an aminotransferase (FGSG_17085), which theoretically can perform two of the enzymatic steps. The enzymes may however also be involved in biosynthesis of dehydroalanine or modification of the polyketide. The dehydro-Ala residue can be a result of cyclization, where serine is dehydrated. The last gene of the cluster encodes a protein with an A/B barrel domain found in variable enzymes, which hampers functional prediction. This Gibberella zeae (strain ATCC MYA-4620 / CBS 123657 / FGSC 9075 / NRRL 31084 / PH-1) (Wheat head blight fungus) protein is Nonribosomal peptide synthetase 7.